Here is a 259-residue protein sequence, read N- to C-terminus: Polycomb group RING finger protein 1 (259 aa).

The segment at 45-84 (CYLCAGYFIDATTITECLHTFCKSCIVKYLQTSKYCPLCN) adopts an RING-type zinc-finger fold.

In terms of assembly, component of a PRC1-like complex.

Its subcellular location is the nucleus. Functionally, component of a Polycomb group (PcG) multiprotein PRC1-like complex, a complex class required to maintain the transcriptionally repressive state of many genes, including Hox genes, throughout development. PcG PRC1 complex acts via chromatin remodeling and modification of histones; it mediates monoubiquitination of histone H2A 'Lys-119', rendering chromatin heritably changed in its expressibility. The sequence is that of Polycomb group RING finger protein 1 (pcgf1) from Xenopus laevis (African clawed frog).